The chain runs to 212 residues: Ribosomal RNA large subunit methyltransferase E (212 aa).

Glycine 57, tryptophan 59, aspartate 77, aspartate 93, and aspartate 122 together coordinate S-adenosyl-L-methionine. Lysine 162 acts as the Proton acceptor in catalysis.

The protein belongs to the class I-like SAM-binding methyltransferase superfamily. RNA methyltransferase RlmE family.

The protein localises to the cytoplasm. It carries out the reaction uridine(2552) in 23S rRNA + S-adenosyl-L-methionine = 2'-O-methyluridine(2552) in 23S rRNA + S-adenosyl-L-homocysteine + H(+). Functionally, specifically methylates the uridine in position 2552 of 23S rRNA at the 2'-O position of the ribose in the fully assembled 50S ribosomal subunit. This Coxiella burnetii (strain RSA 493 / Nine Mile phase I) protein is Ribosomal RNA large subunit methyltransferase E.